The chain runs to 530 residues: MSVDTYTETTKIDKLLKKPTSHFQLSTTQLYNKILDNNEGVLTELGAVNASTGKYTGRSPKDKFFVSEPSYRDNIDWGEINQPIDEETFLKLYHKVLDYLDKKDELYVFKGYAGSDKDTMLKLTVINELAWHNLFAKNMFIRPESKEEATKIKPNFTIVSAPHFKADPEVDGTKSETFVIISFKHKVILIGGTEYAGEMKKGIFSVMNYLLPMQDIMSMHCSANVGEKGDVALFFGLSGTGKTTLSADPHRKLIGDDEHGWNKNGVFNIEGGCYAKAINLSKEKEPQIFDAIKYGAILENTVVAEDGSVDFEDNRYTENTRAAYPINHIDNIVVPSKAAHPNTIIFLTADAFGVIPPISKLNKDQAMYHFLSGFTSKLAGTERGVTEPEPSFSTCFGAPFFPLHPTVYADLLGELIDLHDVDVYLVNTGWTGGKYGVGRRISLHYTRQMVNQAISGKLKNAEYTKDSTFGLSIPVKIEDVPKTILNPINAWSDKEKYKAQAEDLIQRFEKNFEKFGEKVEHIAEKGSFNK.

The substrate site is built by R58, Y195, and K201. Residues K201, H220, and 236 to 244 each bind ATP; that span reads GLSGTGKTT. Residues K201 and H220 each coordinate Mn(2+). D257 contributes to the Mn(2+) binding site. ATP-binding positions include E285, R321, 440 to 441, and T446; that span reads RI. R321 serves as a coordination point for substrate.

The protein belongs to the phosphoenolpyruvate carboxykinase (ATP) family. It depends on Mn(2+) as a cofactor.

Its subcellular location is the cytoplasm. It carries out the reaction oxaloacetate + ATP = phosphoenolpyruvate + ADP + CO2. It functions in the pathway carbohydrate biosynthesis; gluconeogenesis. In terms of biological role, involved in the gluconeogenesis. Catalyzes the conversion of oxaloacetate (OAA) to phosphoenolpyruvate (PEP) through direct phosphoryl transfer between the nucleoside triphosphate and OAA. The protein is Phosphoenolpyruvate carboxykinase (ATP) of Staphylococcus aureus (strain MSSA476).